The sequence spans 739 residues: MICOS complex subunit Mic60 (739 aa).

The tract at residues 23 to 63 (ANNRQFGGSSSGSGGREQGRRQQEEQGQQGDQGYQGYQSLP) is disordered. A compositionally biased stretch (low complexity) spans 47-61 (EQGQQGDQGYQGYQS). Residues 69 to 89 (AGFGKVVLFVSPLAAVGGVIT) form a helical membrane-spanning segment. Residues 154–219 (VTGLFGGGSG…PAAKPKDNPL (66 aa)) are disordered. Over residues 163–198 (GDDKSKKSKVEPVKATPAEEKRPSKPSEVSKTEAKP) the composition is skewed to basic and acidic residues. Residues 199–212 (VSKPAAAAAPAPAA) show a composition bias toward low complexity. Residues 283-339 (TAVATAERAAREAQEKIVACEIALSAAATAQNAKKVEAVRDKIKKLVDHIGNVKDEL) are a coiled coil.

The protein belongs to the MICOS complex subunit Mic60 family. Component of the mitochondrial contact site and cristae organizing system (MICOS) complex. Interacts with the mitochondria-shaping protein Opa1.

It is found in the mitochondrion inner membrane. Component of the MICOS complex, a large protein complex of the mitochondrial inner membrane that plays crucial roles in the maintenance of crista junctions, inner membrane architecture, and formation of contact sites to the outer membrane. The protein is MICOS complex subunit Mic60 of Drosophila melanogaster (Fruit fly).